A 352-amino-acid polypeptide reads, in one-letter code: C-C chemokine receptor type 5 (352 aa).

The Extracellular portion of the chain corresponds to 1–30 (MDYSMSTALYDIDYGMSEPCQKIDVKQVAA). A Sulfotyrosine modification is found at tyrosine 3. Serine 6 is a glycosylation site (O-linked (GalNAc...) serine). A sulfotyrosine mark is found at tyrosine 10 and tyrosine 14. O-linked (GalNAc...) serine glycosylation occurs at serine 17. 2 cysteine pairs are disulfide-bonded: cysteine 20-cysteine 269 and cysteine 101-cysteine 178. The chain crosses the membrane as a helical span at residues 31–58 (RLLPPLYSLVFIFGFVGNLLVVLILITC). Residues 59–68 (KKLKSMTDIY) are Cytoplasmic-facing. Residues 69 to 89 (LLNLAISDLLFLLTLPLWAHY) traverse the membrane as a helical segment. Residues 90-102 (AAAEWDFGGAMCK) lie on the Extracellular side of the membrane. A helical transmembrane segment spans residues 103-124 (VFTGMYHMGYFGGIFFIILLTI). Topologically, residues 125–141 (DRYLAIVHAVFALKART) are cytoplasmic. Residues 142–166 (VTFGVVTSGVTWVAAILVSLPDIIF) traverse the membrane as a helical segment. Topologically, residues 167 to 198 (TRSQKEGFRCSCSPHFPASQYQFWKNFHTIMR) are extracellular. A helical membrane pass occupies residues 199–218 (NILSLVLPLLVMIVCYSGIL). The Cytoplasmic portion of the chain corresponds to 219 to 235 (KTLLRCRNEKRRHRAVR). Residues 236–260 (LIFAIMVVYFLFWAPYNVVLLLNTF) form a helical membrane-spanning segment. At 261 to 277 (QEFFGLNNCSSSNRLDR) the chain is on the extracellular side. A helical transmembrane segment spans residues 278-301 (AMQVTETLGMTHCCINPVVYAFVG). Over 302–352 (EKFRSYLSAFFRKHVAKRLCKHCPLLPRETPEPASSVYTRSTGEQEISVGL) the chain is Cytoplasmic. S-palmitoyl cysteine attachment occurs at residues cysteine 321 and cysteine 324. A disordered region spans residues 332–352 (PEPASSVYTRSTGEQEISVGL). Phosphoserine; by BARK1 occurs at positions 336, 337, 342, and 349. Positions 337 to 346 (SVYTRSTGEQ) are enriched in polar residues.

The protein belongs to the G-protein coupled receptor 1 family. In terms of assembly, interacts with PRAF2. Efficient ligand binding to CCL3/MIP-1alpha and CCL4/MIP-1beta requires sulfation, O-glycosylation and sialic acid modifications. Glycosylation on Ser-6 is required for efficient binding of CCL4. Interacts with GRK2. Interacts with ARRB1 and ARRB2. Interacts with CNIH4. Interacts with S100A4; this interaction stimulates T-lymphocyte chemotaxis. Sulfated on at least 2 of the N-terminal tyrosines. Sulfation is required for efficient binding of the chemokines, CCL3 and CCL4. Post-translationally, O-glycosylated, but not N-glycosylated. Ser-6 appears to be the major site. Also sialylated glycans present which contribute to chemokine binding. Ser-17 may also be glycosylated and, if so, with small moieties such as a T-antigen. In terms of processing, palmitoylation in the C-terminal is important for cell surface expression. Phosphorylation on serine residues in the C-terminal is stimulated by binding CC chemokines especially by APO-RANTES.

The protein localises to the cell membrane. Its function is as follows. Receptor for a number of inflammatory CC-chemokines including CCL3/MIP-1-alpha, CCL4/MIP-1-beta and RANTES and subsequently transduces a signal by increasing the intracellular calcium ion level. May play a role in the control of granulocytic lineage proliferation or differentiation. Participates in T-lymphocyte migration to the infection site by acting as a chemotactic receptor. The polypeptide is C-C chemokine receptor type 5 (CCR5) (Oryctolagus cuniculus (Rabbit)).